A 221-amino-acid polypeptide reads, in one-letter code: MGGSDSDSRSRSRNREENKSRSLSSSSARRPSPNHEKKHEHSSEKKKMKRRRSSSSSSSSSSPSPSREKKAKKKKKRREAKKLKREKKKEKKEKKRQKKLALKAERAAALTASVPAPVPEEKPQTYLKTWQSEETKEHGPAMTDEQKAKLSTRRPLTKEEYEARQSVIRRVLDPETGRTRLIRGDGEILEEIVSKERHKDINKQSTRGDGDAFQKRLGISR.

Positions 1 to 20 (MGGSDSDSRSRSRNREENKS) are enriched in basic and acidic residues. 2 disordered regions span residues 1 to 162 (MGGS…EEYE) and 196 to 221 (ERHKDINKQSTRGDGDAFQKRLGISR). A compositionally biased stretch (low complexity) spans 21–31 (RSLSSSSARRP). A compositionally biased stretch (basic and acidic residues) spans 33–45 (PNHEKKHEHSSEK). Residues 54-65 (SSSSSSSSSPSP) are compositionally biased toward low complexity. A compositionally biased stretch (basic residues) spans 69-101 (KKAKKKKKRREAKKLKREKKKEKKEKKRQKKLA). Basic and acidic residues-rich tracts occupy residues 131–148 (QSEETKEHGPAMTDEQKA) and 196–214 (ERHKDINKQSTRGDGDAFQ).

This sequence belongs to the ARL6IP4 family.

It is found in the nucleus. It localises to the nucleolus. The protein localises to the nucleus speckle. May be involved in modulating alternative pre-mRNA splicing. The polypeptide is ADP-ribosylation factor-like protein 6-interacting protein 4 (arl6ip4) (Danio rerio (Zebrafish)).